Consider the following 492-residue polypeptide: Glutamate--cysteine ligase A, chloroplastic (492 aa).

A disulfide bridge links Cys-156 with Cys-376.

It belongs to the carboxylate-amine ligase family. Glutamate--cysteine ligase type 2 subfamily. As to quaternary structure, homodimer or monomer when oxidized or reduced, respectively. In terms of processing, the Cys-156-Cys-376 disulfide bridge is known to modulate the enzyme activity according to the redox status. The oxidized form constitutes the active enzyme.

It is found in the plastid. The protein resides in the chloroplast. The enzyme catalyses L-cysteine + L-glutamate + ATP = gamma-L-glutamyl-L-cysteine + ADP + phosphate + H(+). Its pathway is sulfur metabolism; glutathione biosynthesis; glutathione from L-cysteine and L-glutamate: step 1/2. The polypeptide is Glutamate--cysteine ligase A, chloroplastic (GSH1-1) (Oryza sativa subsp. japonica (Rice)).